The chain runs to 256 residues: Neuroendocrine secretory protein 55 (256 aa).

Positions 1-46 (MDRRSRAHQWRRARHNYNDLCPPIGRRAATALLWLSCSIALLRALA) are cleaved as a signal peptide. Residues 61–256 (SFLNAHHRSA…RKGPIPIRRH (196 aa)) are disordered. Over residues 86 to 103 (ESDHEHEEAEPELARPEC) the composition is skewed to basic and acidic residues. 2 stretches are compositionally biased toward acidic residues: residues 104 to 139 (LEYDQDDYETETDSETEPESDIQSETEFETEPETEP) and 206 to 216 (LDEDPRDPEES). The segment covering 225 to 236 (QPRRCKTRRPAR) has biased composition (basic residues).

This sequence belongs to the NESP55 family. Binds keratan sulfate chains. Post-translationally, may be proteolytically processed to give rise to a number of active peptides.

It is found in the cytoplasmic vesicle. Its subcellular location is the secretory vesicle. It localises to the synaptic vesicle. The protein localises to the secreted. This is Neuroendocrine secretory protein 55 from Rattus norvegicus (Rat).